A 331-amino-acid polypeptide reads, in one-letter code: Protein-methionine-sulfoxide reductase catalytic subunit MsrP (331 aa).

Positions 1 to 54 (MLIKTDRWLRGDDIPASEITPQHLFDQRRRLLAAAALGAAGAALSPWAARRAFA) form a signal peptide, tat-type signal. Mo-molybdopterin-binding positions include Asn-86, 89–90 (YE), Cys-144, Ser-179, Asn-227, Arg-232, and 243–245 (SAK).

The protein belongs to the MsrP family. In terms of assembly, heterodimer of a catalytic subunit (MsrP) and a heme-binding subunit (MsrQ). Mo-molybdopterin is required as a cofactor. Post-translationally, predicted to be exported by the Tat system. The position of the signal peptide cleavage has not been experimentally proven.

Its subcellular location is the periplasm. It carries out the reaction L-methionyl-[protein] + a quinone + H2O = L-methionyl-(S)-S-oxide-[protein] + a quinol. The enzyme catalyses L-methionyl-[protein] + a quinone + H2O = L-methionyl-(R)-S-oxide-[protein] + a quinol. Part of the MsrPQ system that repairs oxidized periplasmic proteins containing methionine sulfoxide residues (Met-O), using respiratory chain electrons. Thus protects these proteins from oxidative-stress damage caused by reactive species of oxygen and chlorine generated by the host defense mechanisms. MsrPQ is essential for the maintenance of envelope integrity under bleach stress, rescuing a wide series of structurally unrelated periplasmic proteins from methionine oxidation. The catalytic subunit MsrP is non-stereospecific, being able to reduce both (R-) and (S-) diastereoisomers of methionine sulfoxide. The chain is Protein-methionine-sulfoxide reductase catalytic subunit MsrP from Ralstonia nicotianae (strain ATCC BAA-1114 / GMI1000) (Ralstonia solanacearum).